Consider the following 136-residue polypeptide: Small ribosomal subunit protein uS9 (136 aa).

The protein belongs to the universal ribosomal protein uS9 family.

The polypeptide is Small ribosomal subunit protein uS9 (Borrelia hermsii (strain HS1 / DAH)).